Reading from the N-terminus, the 577-residue chain is Aspartate--tRNA(Asp/Asn) ligase (577 aa).

An L-aspartate-binding site is contributed by E171. Positions 195 to 198 (QLFK) are aspartate. R217 is an L-aspartate binding site. ATP contacts are provided by residues 217–219 (RDE) and Q226. Residue H444 coordinates L-aspartate. E474 is a binding site for ATP. R481 serves as a coordination point for L-aspartate. 526–529 (GFDR) is an ATP binding site.

The protein belongs to the class-II aminoacyl-tRNA synthetase family. Type 1 subfamily. Homodimer.

It is found in the cytoplasm. It catalyses the reaction tRNA(Asx) + L-aspartate + ATP = L-aspartyl-tRNA(Asx) + AMP + diphosphate. Functionally, aspartyl-tRNA synthetase with relaxed tRNA specificity since it is able to aspartylate not only its cognate tRNA(Asp) but also tRNA(Asn). Reaction proceeds in two steps: L-aspartate is first activated by ATP to form Asp-AMP and then transferred to the acceptor end of tRNA(Asp/Asn). The polypeptide is Aspartate--tRNA(Asp/Asn) ligase (Helicobacter pylori (strain G27)).